The primary structure comprises 71 residues: Small ribosomal subunit protein bS21 (71 aa).

This sequence belongs to the bacterial ribosomal protein bS21 family.

This chain is Small ribosomal subunit protein bS21, found in Dichelobacter nodosus (strain VCS1703A).